We begin with the raw amino-acid sequence, 62 residues long: Large ribosomal subunit protein bL28 (62 aa).

The protein belongs to the bacterial ribosomal protein bL28 family.

This Streptococcus equi subsp. equi (strain 4047) protein is Large ribosomal subunit protein bL28.